A 306-amino-acid polypeptide reads, in one-letter code: Acetyl-coenzyme A carboxylase carboxyl transferase subunit beta (306 aa).

In terms of domain architecture, CoA carboxyltransferase N-terminal spans 25 to 294; that stretch reads LWIKDPTSGE…AVNPSNPSPT (270 aa). A disordered region spans residues 286–306; it reads VNPSNPSPTDSQPPLSKAEAA. A compositionally biased stretch (polar residues) spans 287–299; that stretch reads NPSNPSPTDSQPP.

The protein belongs to the AccD/PCCB family. In terms of assembly, acetyl-CoA carboxylase is a heterohexamer composed of biotin carboxyl carrier protein (AccB), biotin carboxylase (AccC) and two subunits each of ACCase subunit alpha (AccA) and ACCase subunit beta (AccD).

It is found in the cytoplasm. The enzyme catalyses N(6)-carboxybiotinyl-L-lysyl-[protein] + acetyl-CoA = N(6)-biotinyl-L-lysyl-[protein] + malonyl-CoA. It functions in the pathway lipid metabolism; malonyl-CoA biosynthesis; malonyl-CoA from acetyl-CoA: step 1/1. Component of the acetyl coenzyme A carboxylase (ACC) complex. Biotin carboxylase (BC) catalyzes the carboxylation of biotin on its carrier protein (BCCP) and then the CO(2) group is transferred by the transcarboxylase to acetyl-CoA to form malonyl-CoA. In Bartonella quintana (strain Toulouse) (Rochalimaea quintana), this protein is Acetyl-coenzyme A carboxylase carboxyl transferase subunit beta.